Here is a 222-residue protein sequence, read N- to C-terminus: MKKAVVILSGGMDSTTAAFIAKSEGYEIIPVHFNYSQRTEKRELKAFNDICDYLNLDNRYIIDIPFFKQIGASALVDENIDVPVDGVKPGIPVTYVPFRNGIFLSIAAAVAEKEGAEAIYIGVVEEDSSGYPDCTEDFIQNMQKAVNSGTKPETNIEIKTPLVHLKKEDIVKTAVKYNVPLHLTWSCYKNEDEACGVCDSCRLRLKGFEKAGIEDRIPYKQK.

An ATP-binding site is contributed by 8–18 (LSGGMDSTTAA). Zn(2+) is bound by residues C187, C195, C198, and C201.

It belongs to the QueC family. Zn(2+) serves as cofactor.

It carries out the reaction 7-carboxy-7-deazaguanine + NH4(+) + ATP = 7-cyano-7-deazaguanine + ADP + phosphate + H2O + H(+). Its pathway is purine metabolism; 7-cyano-7-deazaguanine biosynthesis. Catalyzes the ATP-dependent conversion of 7-carboxy-7-deazaguanine (CDG) to 7-cyano-7-deazaguanine (preQ(0)). This chain is 7-cyano-7-deazaguanine synthase, found in Nautilia profundicola (strain ATCC BAA-1463 / DSM 18972 / AmH).